The following is a 160-amino-acid chain: Small ribosomal subunit protein uS19 (160 aa).

The disordered stretch occupies residues 1-27 (MARQKFSGKGGKGKSKKGQQSTAPRRR).

This sequence belongs to the universal ribosomal protein uS19 family.

Protein S19 forms a complex with S13 that binds strongly to the 16S ribosomal RNA. This Methanococcus vannielii (strain ATCC 35089 / DSM 1224 / JCM 13029 / OCM 148 / SB) protein is Small ribosomal subunit protein uS19.